Here is a 1011-residue protein sequence, read N- to C-terminus: DNA-directed RNA polymerase subunit beta'' (1011 aa).

Residues Cys-216, Cys-282, Cys-288, and Cys-291 each contribute to the Zn(2+) site.

It belongs to the RNA polymerase beta' chain family. RpoC2 subfamily. As to quaternary structure, in plastids the minimal PEP RNA polymerase catalytic core is composed of four subunits: alpha, beta, beta', and beta''. When a (nuclear-encoded) sigma factor is associated with the core the holoenzyme is formed, which can initiate transcription. Zn(2+) serves as cofactor.

Its subcellular location is the plastid. The protein resides in the chloroplast. The catalysed reaction is RNA(n) + a ribonucleoside 5'-triphosphate = RNA(n+1) + diphosphate. DNA-dependent RNA polymerase catalyzes the transcription of DNA into RNA using the four ribonucleoside triphosphates as substrates. The chain is DNA-directed RNA polymerase subunit beta'' from Ostreococcus tauri.